A 328-amino-acid polypeptide reads, in one-letter code: Nitrilase (328 aa).

Positions 9–286 (VRVAAIQAEP…EGILYANVDV (278 aa)) constitute a CN hydrolase domain. Residue E49 is the Proton acceptor of the active site. K131 is an active-site residue. C166 (nucleophile) is an active-site residue.

It belongs to the carbon-nitrogen hydrolase superfamily. Nitrilase family.

The enzyme catalyses a nitrile + 2 H2O = a carboxylate + NH4(+). Its function is as follows. Nitrilase that hydrolyzes preferentially 4-cyanopyridine. Is also able to hydrolyze some aliphatic nitriles, such as (R,S)-mandelonitrile. This is Nitrilase from Penicillium rubens (strain ATCC 28089 / DSM 1075 / NRRL 1951 / Wisconsin 54-1255) (Penicillium chrysogenum).